The chain runs to 312 residues: Methionyl-tRNA formyltransferase (312 aa).

Residue 111–114 (SLLP) participates in (6S)-5,6,7,8-tetrahydrofolate binding.

Belongs to the Fmt family.

The enzyme catalyses L-methionyl-tRNA(fMet) + (6R)-10-formyltetrahydrofolate = N-formyl-L-methionyl-tRNA(fMet) + (6S)-5,6,7,8-tetrahydrofolate + H(+). Its function is as follows. Attaches a formyl group to the free amino group of methionyl-tRNA(fMet). The formyl group appears to play a dual role in the initiator identity of N-formylmethionyl-tRNA by promoting its recognition by IF2 and preventing the misappropriation of this tRNA by the elongation apparatus. In Rhodopseudomonas palustris (strain HaA2), this protein is Methionyl-tRNA formyltransferase.